The chain runs to 100 residues: Urease subunit gamma (100 aa).

This sequence belongs to the urease gamma subunit family. In terms of assembly, heterotrimer of UreA (gamma), UreB (beta) and UreC (alpha) subunits. Three heterotrimers associate to form the active enzyme.

The protein localises to the cytoplasm. The enzyme catalyses urea + 2 H2O + H(+) = hydrogencarbonate + 2 NH4(+). Its pathway is nitrogen metabolism; urea degradation; CO(2) and NH(3) from urea (urease route): step 1/1. The chain is Urease subunit gamma from Limosilactobacillus fermentum (Lactobacillus fermentum).